The following is a 293-amino-acid chain: Pantothenate synthetase (293 aa).

38 to 45 lines the ATP pocket; the sequence is MGALHEGH. The active-site Proton donor is the His-45. A (R)-pantoate-binding site is contributed by Gln-69. Gln-69 provides a ligand contact to beta-alanine. An ATP-binding site is contributed by 155 to 158; the sequence is GEKD. Gln-161 serves as a coordination point for (R)-pantoate. 192–195 contributes to the ATP binding site; that stretch reads QSSR.

It belongs to the pantothenate synthetase family. Homodimer.

It is found in the cytoplasm. The catalysed reaction is (R)-pantoate + beta-alanine + ATP = (R)-pantothenate + AMP + diphosphate + H(+). The protein operates within cofactor biosynthesis; (R)-pantothenate biosynthesis; (R)-pantothenate from (R)-pantoate and beta-alanine: step 1/1. Catalyzes the condensation of pantoate with beta-alanine in an ATP-dependent reaction via a pantoyl-adenylate intermediate. This is Pantothenate synthetase from Hyphomonas neptunium (strain ATCC 15444).